We begin with the raw amino-acid sequence, 946 residues long: MSTSTAEPSGLDNVRHRARAASSISTDTAPEAVTEKEREARPNKTYGRTPDGTVFVVPETHDMVSQLLDPREPKNLSDVLVLAILALHIWAAYALPSSLKRPIFALIFLFWRASYNVGIGYLLTVQSNYKLMVIWAKRMQLFENPSTGKNPRPWLYQLLQNELEAKIPKDYKMAEAPLEYNTWLVFRRVVDLILMCDFVSYCLFAIVCAHKPVSEGFAIAAARWVIGIALVGFNLWVKLDAHRVVKDYAWYWGDFFYLIEQELTFDGVFEMAPHPMYSIGYAGYYGISMMAASYDVLFISILAHAAQFAFLAIVENPHIEKTYNPPPPRQRAESEVSSSEATAESFRKSTKTPSTPLPVHNMVGVHNFDPFRITDYTSVLLVGCFAALALVTPSTPIYQALFVVNAIVWRLWYSVGLGVILTKQSNEKMFTRHFLKFGETAAEAWRQWKGMYHLSMTLCYVSFLAACWKMYNYPADWGYGWVLLKHVVGISLVALQIWTATSIYESLGEFGWFYGDFFFDSTGKLTYKSIYRFLNNPERVIGTAGLWGMALITWSSPIFLIALIGHILTLGFISYVEKPHMQKIYGENLRQEAGLTKFIKRSLPEPVKGLQMSVDKVWEDSKHFFDDFVDVARTKLGAGSSTIARDTSALFNKYPARLTLSRISPDLAGYDPKHYSISMEGTPLVGADEKATGKESANARVSKAVKTKVFEYGAPIRVKWTAPANHSKKDWVGLYMVTDNRSREVTEVPTLGRWVPARPSQYDTTTDEGIVSWDQPAKSPCPEVDFVQGEMVFEGDKLWWTQGVFEFRYHHNSGHNVMAISEPFEVRLAKVDDEDTEVTGPREVEAALLPIVRNCLDRDPDIAPATVEERFGAHVERDSKYAKRVVYAIHHMFGVEFAPAVVPADGDVRKLAWRICSAKEVLAPYSMSQRLQSPSTPVRDKFPDSL.

Residues 1–51 form a disordered region; it reads MSTSTAEPSGLDNVRHRARAASSISTDTAPEAVTEKEREARPNKTYGRTPD. Residues 1–78 lie on the Lumenal side of the membrane; that stretch reads MSTSTAEPSG…DPREPKNLSD (78 aa). The segment covering 33 to 42 has biased composition (basic and acidic residues); the sequence is VTEKEREARP. Residues 79–99 form a helical membrane-spanning segment; that stretch reads VLVLAILALHIWAAYALPSSL. At 100-102 the chain is on the cytoplasmic side; the sequence is KRP. The helical transmembrane segment at 103-123 threads the bilayer; that stretch reads IFALIFLFWRASYNVGIGYLL. Topologically, residues 124–188 are lumenal; sequence TVQSNYKLMV…EYNTWLVFRR (65 aa). Residues 189 to 209 traverse the membrane as a helical segment; that stretch reads VVDLILMCDFVSYCLFAIVCA. Residues 210-216 are Cytoplasmic-facing; the sequence is HKPVSEG. Residues 217–237 form a helical membrane-spanning segment; sequence FAIAAARWVIGIALVGFNLWV. The Lumenal segment spans residues 238–266; the sequence is KLDAHRVVKDYAWYWGDFFYLIEQELTFD. The chain crosses the membrane as a helical span at residues 267–287; that stretch reads GVFEMAPHPMYSIGYAGYYGI. Topologically, residues 288–293 are cytoplasmic; sequence SMMAAS. A helical transmembrane segment spans residues 294–314; the sequence is YDVLFISILAHAAQFAFLAIV. Topologically, residues 315 to 377 are lumenal; sequence ENPHIEKTYN…FDPFRITDYT (63 aa). The tract at residues 322–355 is disordered; it reads TYNPPPPRQRAESEVSSSEATAESFRKSTKTPST. The span at 335 to 344 shows a compositional bias: low complexity; the sequence is EVSSSEATAE. The chain crosses the membrane as a helical span at residues 378–398; it reads SVLLVGCFAALALVTPSTPIY. Topologically, residues 399-400 are cytoplasmic; that stretch reads QA. Residues 401–421 traverse the membrane as a helical segment; that stretch reads LFVVNAIVWRLWYSVGLGVIL. Over 422–447 the chain is Lumenal; that stretch reads TKQSNEKMFTRHFLKFGETAAEAWRQ. The helical transmembrane segment at 448–468 threads the bilayer; sequence WKGMYHLSMTLCYVSFLAACW. Over 469–476 the chain is Cytoplasmic; it reads KMYNYPAD. The helical transmembrane segment at 477 to 497 threads the bilayer; sequence WGYGWVLLKHVVGISLVALQI. Over 498–555 the chain is Lumenal; the sequence is WTATSIYESLGEFGWFYGDFFFDSTGKLTYKSIYRFLNNPERVIGTAGLWGMALITWS. Residues 556 to 576 form a helical membrane-spanning segment; that stretch reads SPIFLIALIGHILTLGFISYV. Residues 577 to 946 are Cytoplasmic-facing; it reads EKPHMQKIYG…PVRDKFPDSL (370 aa).

The protein belongs to the class VI-like SAM-binding methyltransferase superfamily. CHO2 family.

It is found in the endoplasmic reticulum membrane. The catalysed reaction is a 1,2-diacyl-sn-glycero-3-phosphoethanolamine + S-adenosyl-L-methionine = a 1,2-diacyl-sn-glycero-3-phospho-N-methylethanolamine + S-adenosyl-L-homocysteine + H(+). It participates in phospholipid metabolism; phosphatidylcholine biosynthesis. Catalyzes the first step of the methylation pathway of phosphatidylcholine biosynthesis, the SAM-dependent methylation of phosphatidylethanolamine (PE) to phosphatidylmonomethylethanolamine (PMME). The sequence is that of Phosphatidylethanolamine N-methyltransferase (CHO2) from Chaetomium globosum (strain ATCC 6205 / CBS 148.51 / DSM 1962 / NBRC 6347 / NRRL 1970) (Soil fungus).